A 390-amino-acid polypeptide reads, in one-letter code: Protein dom34 (390 aa).

Belongs to the eukaryotic release factor 1 family. Pelota subfamily. As to quaternary structure, component of the Dom34-Hbs1 complex, also named Pelota-HBS1L complex, composed of dom34 and hbs1. The cofactor is a divalent metal cation.

It is found in the cytoplasm. Its function is as follows. Component of the Dom34-Hbs1 complex, a complex that recognizes stalled ribosomes and triggers the No-Go Decay (NGD) pathway. In the Dom34-Hbs1 complex, dom34 recognizes ribosomes stalled at the 3' end of an mRNA and engages stalled ribosomes by destabilizing mRNA in the mRNA channel. Following ribosome-binding, the Dom34-Hbs1 complex promotes the disassembly of stalled ribosomes, followed by degradation of damaged mRNAs as part of the NGD pathway. The polypeptide is Protein dom34 (Schizosaccharomyces pombe (strain 972 / ATCC 24843) (Fission yeast)).